The chain runs to 97 residues: Small ribosomal subunit protein bS20 (97 aa).

This sequence belongs to the bacterial ribosomal protein bS20 family.

In terms of biological role, binds directly to 16S ribosomal RNA. In Prochlorococcus marinus (strain MIT 9515), this protein is Small ribosomal subunit protein bS20.